The chain runs to 159 residues: Transcription elongation factor GreA (159 aa).

This sequence belongs to the GreA/GreB family.

In terms of biological role, necessary for efficient RNA polymerase transcription elongation past template-encoded arresting sites. The arresting sites in DNA have the property of trapping a certain fraction of elongating RNA polymerases that pass through, resulting in locked ternary complexes. Cleavage of the nascent transcript by cleavage factors such as GreA or GreB allows the resumption of elongation from the new 3'terminus. GreA releases sequences of 2 to 3 nucleotides. This is Transcription elongation factor GreA from Buchnera aphidicola subsp. Acyrthosiphon pisum (strain APS) (Acyrthosiphon pisum symbiotic bacterium).